Here is a 119-residue protein sequence, read N- to C-terminus: Protein FATTY ACID EXPORT 6 (119 aa).

The next 3 helical transmembrane spans lie at 27–47, 57–77, and 84–104; these read SITS…AGYI, NSTI…LVMG, and GKIM…CFYV.

Belongs to the TMEM14 family.

It is found in the membrane. May be involved in free fatty acids export. The sequence is that of Protein FATTY ACID EXPORT 6 from Arabidopsis thaliana (Mouse-ear cress).